Consider the following 214-residue polypeptide: tRNA (guanine-N(7)-)-methyltransferase (214 aa).

Residues Glu44, Glu69, Asp96, and Asp118 each contribute to the S-adenosyl-L-methionine site. Asp118 is a catalytic residue. Residues Lys122, Asp154, and 191–194 (TEYE) each bind substrate.

This sequence belongs to the class I-like SAM-binding methyltransferase superfamily. TrmB family.

It catalyses the reaction guanosine(46) in tRNA + S-adenosyl-L-methionine = N(7)-methylguanosine(46) in tRNA + S-adenosyl-L-homocysteine. The protein operates within tRNA modification; N(7)-methylguanine-tRNA biosynthesis. Catalyzes the formation of N(7)-methylguanine at position 46 (m7G46) in tRNA. In Listeria welshimeri serovar 6b (strain ATCC 35897 / DSM 20650 / CCUG 15529 / CIP 8149 / NCTC 11857 / SLCC 5334 / V8), this protein is tRNA (guanine-N(7)-)-methyltransferase.